A 64-amino-acid chain; its full sequence is Large ribosomal subunit protein bL35 (64 aa).

Over residues 1 to 26 the composition is skewed to basic residues; that stretch reads MPKMKTKSAAAKRFKTTKSGKIKRKQ. Positions 1 to 46 are disordered; the sequence is MPKMKTKSAAAKRFKTTKSGKIKRKQAYTSHLAPNKTTKQKRHLRK.

It belongs to the bacterial ribosomal protein bL35 family.

In Mycoplasmoides gallisepticum (strain R(low / passage 15 / clone 2)) (Mycoplasma gallisepticum), this protein is Large ribosomal subunit protein bL35.